Consider the following 486-residue polypeptide: Iron-sulfur cluster assembly SufBD family protein ycf24 (486 aa).

It belongs to the iron-sulfur cluster assembly SufBD family.

Its subcellular location is the plastid. The protein localises to the chloroplast. In Trieres chinensis (Marine centric diatom), this protein is Iron-sulfur cluster assembly SufBD family protein ycf24 (ycf24).